The primary structure comprises 814 residues: Acyl-coenzyme A dehydrogenase (814 aa).

Glu497 (proton acceptor) is an active-site residue.

This sequence belongs to the acyl-CoA dehydrogenase family. It depends on FAD as a cofactor.

It catalyses the reaction a medium-chain 2,3-saturated fatty acyl-CoA + oxidized [electron-transfer flavoprotein] + H(+) = a medium-chain (2E)-enoyl-CoA + reduced [electron-transfer flavoprotein]. The enzyme catalyses a long-chain 2,3-saturated fatty acyl-CoA + oxidized [electron-transfer flavoprotein] + H(+) = a long-chain (2E)-enoyl-CoA + reduced [electron-transfer flavoprotein]. It functions in the pathway lipid metabolism; fatty acid beta-oxidation. Its function is as follows. Catalyzes the dehydrogenation of acyl-coenzymes A (acyl-CoAs) to 2-enoyl-CoAs, the first step of the beta-oxidation cycle of fatty acid degradation. Is required for S.typhimurium to utilize medium- and long-chain fatty acids as sole carbon sources for growth. Is needed for bacterial survival during carbone-source starvation. The protein is Acyl-coenzyme A dehydrogenase (fadE) of Salmonella typhimurium (strain LT2 / SGSC1412 / ATCC 700720).